The chain runs to 128 residues: Sulfurtransferase TusD (128 aa).

Cysteine 78 serves as the catalytic Cysteine persulfide intermediate.

This sequence belongs to the DsrE/TusD family. Heterohexamer, formed by a dimer of trimers. The hexameric TusBCD complex contains 2 copies each of TusB, TusC and TusD. The TusBCD complex interacts with TusE.

Its subcellular location is the cytoplasm. Its function is as follows. Part of a sulfur-relay system required for 2-thiolation of 5-methylaminomethyl-2-thiouridine (mnm(5)s(2)U) at tRNA wobble positions. Accepts sulfur from TusA and transfers it in turn to TusE. The chain is Sulfurtransferase TusD from Citrobacter koseri (strain ATCC BAA-895 / CDC 4225-83 / SGSC4696).